Here is a 442-residue protein sequence, read N- to C-terminus: Tubulin beta chain (442 aa).

8 residues coordinate GTP: Gln-11, Glu-69, Ser-138, Gly-142, Thr-143, Gly-144, Asn-204, and Asn-226. Mg(2+) is bound at residue Glu-69.

This sequence belongs to the tubulin family. As to quaternary structure, dimer of alpha and beta chains. A typical microtubule is a hollow water-filled tube with an outer diameter of 25 nm and an inner diameter of 15 nM. Alpha-beta heterodimers associate head-to-tail to form protofilaments running lengthwise along the microtubule wall with the beta-tubulin subunit facing the microtubule plus end conferring a structural polarity. Microtubules usually have 13 protofilaments but different protofilament numbers can be found in some organisms and specialized cells. The cofactor is Mg(2+).

It is found in the cytoplasm. The protein resides in the cytoskeleton. Functionally, tubulin is the major constituent of microtubules, a cylinder consisting of laterally associated linear protofilaments composed of alpha- and beta-tubulin heterodimers. Microtubules grow by the addition of GTP-tubulin dimers to the microtubule end, where a stabilizing cap forms. Below the cap, tubulin dimers are in GDP-bound state, owing to GTPase activity of alpha-tubulin. This is Tubulin beta chain (TUB-B) from Pneumocystis carinii.